We begin with the raw amino-acid sequence, 361 residues long: Mannose-1-phosphate guanyltransferase (361 aa).

The protein belongs to the transferase hexapeptide repeat family.

The protein localises to the cytoplasm. The enzyme catalyses alpha-D-mannose 1-phosphate + GTP + H(+) = GDP-alpha-D-mannose + diphosphate. The protein operates within nucleotide-sugar biosynthesis; GDP-alpha-D-mannose biosynthesis; GDP-alpha-D-mannose from alpha-D-mannose 1-phosphate (GTP route): step 1/1. In terms of biological role, involved in cell wall synthesis where it is required for glycosylation. Involved in cell cycle progression through cell-size checkpoint. This chain is Mannose-1-phosphate guanyltransferase (MPG1), found in Kluyveromyces lactis (strain ATCC 8585 / CBS 2359 / DSM 70799 / NBRC 1267 / NRRL Y-1140 / WM37) (Yeast).